Here is a 389-residue protein sequence, read N- to C-terminus: Chalcone synthase 3 (389 aa).

Cys-164 is a catalytic residue.

Belongs to the thiolase-like superfamily. Chalcone/stilbene synthases family.

It catalyses the reaction (E)-4-coumaroyl-CoA + 3 malonyl-CoA + 3 H(+) = 2',4,4',6'-tetrahydroxychalcone + 3 CO2 + 4 CoA. It participates in secondary metabolite biosynthesis; flavonoid biosynthesis. Its function is as follows. The primary product of this enzyme is 4,2',4',6'-tetrahydroxychalcone (also termed naringenin-chalcone or chalcone) which can under specific conditions spontaneously isomerize into naringenin. This is Chalcone synthase 3 (CHS3) from Camellia sinensis (Tea plant).